The sequence spans 690 residues: Ligand of Numb protein X 2 (690 aa).

An RING-type zinc finger spans residues 50–88; it reads CHICLQPLLQPLDTPCGHTFCYKCLRNFLQEKDFCPLDR. Residues 198-224 form a disordered region; it reads STWSEEPGLDNPAFEESAGADTTQQPL. An NPXY motif motif is present at residues 208–211; sequence NPAF. 4 consecutive PDZ domains span residues 233–318, 339–422, 468–554, and 600–688; these read TIEI…LRER, QVAL…ARPG, HITV…KALE, and DIVL…WPGS. The segment at 418 to 455 is disordered; sequence IARPGKPQPGNTIREAGNHSSSSQHHTPPPYYSRPSSH.

In terms of assembly, interacts with the phosphotyrosine interaction domain of NUMB.

This is Ligand of Numb protein X 2 (LNX2) from Homo sapiens (Human).